Consider the following 351-residue polypeptide: Hepatocyte nuclear factor 3-gamma (351 aa).

The segment covering 52–73 (PGGLPASPLPTGPLAPPAPTAP) has biased composition (pro residues). Residues 52–94 (PGGLPASPLPTGPLAPPAPTAPLGPTFPGLGASTGGGSSSGYG) are disordered. Over residues 83-94 (ASTGGGSSSGYG) the composition is skewed to gly residues. The fork-head DNA-binding region spans 118-212 (KPPYSYISLI…ENGCYLRRQK (95 aa)). Positions 218-275 (EKVKKGGGGSSASRNSAGSASTATAPAATVASTPQPQPPPPEPEAQGGDEVGALDCGS) are disordered. Residues 228 to 251 (SASRNSAGSASTATAPAATVASTP) show a composition bias toward low complexity.

It is found in the nucleus. Functionally, transcription activator for a number of liver genes such as AFP, albumin, tyrosine aminotransferase, PEPCK, etc. Interacts with the cis-acting regulatory regions of these genes. This chain is Hepatocyte nuclear factor 3-gamma (FOXA3), found in Bos taurus (Bovine).